We begin with the raw amino-acid sequence, 104 residues long: Cytochrome c-551 (104 aa).

An N-terminal signal peptide occupies residues 1–22 (MKPYALLSLLATGTLLAQGAWA). Heme c contacts are provided by cysteine 34, cysteine 37, histidine 38, and methionine 83.

Post-translationally, binds 1 heme c group covalently per subunit.

It localises to the periplasm. Functionally, electron donor for cytochrome cd1 in nitrite and nitrate respiration. The polypeptide is Cytochrome c-551 (nirM) (Pseudomonas aeruginosa (strain ATCC 15692 / DSM 22644 / CIP 104116 / JCM 14847 / LMG 12228 / 1C / PRS 101 / PAO1)).